Here is a 301-residue protein sequence, read N- to C-terminus: Mycothiol acetyltransferase (301 aa).

N-acetyltransferase domains are found at residues 6–151 (EWRQ…ILRD) and 153–301 (VSLR…QYGR). An acetyl-CoA-binding site is contributed by 79 to 81 (LFV). 1D-myo-inositol 2-(L-cysteinylamino)-2-deoxy-alpha-D-glucopyranoside-binding residues include Glu180, Lys219, and Glu235. Acetyl-CoA is bound by residues 239–241 (VGV) and 246–252 (QGGGLGR). A 1D-myo-inositol 2-(L-cysteinylamino)-2-deoxy-alpha-D-glucopyranoside-binding site is contributed by Tyr273.

Belongs to the acetyltransferase family. MshD subfamily. Monomer.

The enzyme catalyses 1D-myo-inositol 2-(L-cysteinylamino)-2-deoxy-alpha-D-glucopyranoside + acetyl-CoA = mycothiol + CoA + H(+). Its function is as follows. Catalyzes the transfer of acetyl from acetyl-CoA to desacetylmycothiol (Cys-GlcN-Ins) to form mycothiol. The protein is Mycothiol acetyltransferase of Amycolatopsis mediterranei (strain U-32).